Here is a 450-residue protein sequence, read N- to C-terminus: uncharacterized protein (450 aa).

The protein belongs to the herpesviridae BBLF2 family.

This is an uncharacterized protein from Saimiriine herpesvirus 2 (strain 11) (SaHV-2).